Reading from the N-terminus, the 342-residue chain is Protein-ribulosamine 3-kinase, chloroplastic (342 aa).

Residues 1 to 46 (MANVALLSAASPSTSSAAPRLRHVARRRPSRRSACPRSAASRLSIM) constitute a chloroplast transit peptide. 141–143 (EFI) contributes to the ATP binding site. D246 acts as the Proton acceptor in catalysis.

The protein belongs to the fructosamine kinase family.

It is found in the plastid. The protein localises to the chloroplast. It catalyses the reaction N(6)-D-ribulosyl-L-lysyl-[protein] + ATP = N(6)-(3-O-phospho-D-ribulosyl)-L-lysyl-[protein] + ADP + H(+). It carries out the reaction N(6)-(D-erythrulosyl)-L-lysyl-[protein] + ATP = N(6)-(3-O-phospho-D-erythrulosyl)-L-lysyl-[protein] + ADP + H(+). Functionally, initiates a process leading to the deglycation of proteins. Phosphorylates low-molecular-mass and protein-bound erythrulosamines and ribulosamines, but not fructosamines or psicosamines, on the third carbon of the sugar moiety. Protein-bound erythrulosamine 3-phosphates and ribulosamine 3-phosphates are unstable and decompose under physiological conditions. The protein is Protein-ribulosamine 3-kinase, chloroplastic of Oryza sativa subsp. japonica (Rice).